A 1514-amino-acid polypeptide reads, in one-letter code: MDFLGSTTGSGTLAMLFSFSESILPLDSRSFLLKPLFLRWLSGFLHSVLLLVLFFSWVRKKIRGDSGVTESLKDRRDFGFKSALFCSLALSLLNLVLMSLSGFYWYESGWLDNEQLVSSLGFLLGMVSWGVLSICLHRCRDCEHKKAPFLLRLWLVFYLVVSCYSLVVDFVMYERRETVPVHLLVFDIVAFIAAVFLGYVAVLKKDRSNSNGVLEEPLLNGGDSRVGGDDSVELNKTNGSGEATPYSRAGILSLLTFSWMSPLIDIGNKKTLDLEDVPQLHDTDSVVGLAPKFRSMLESPDGGERSGVTTFKLIKALYFTAQWEILVTAFFAFIYTVASYVGPALIDTFVQYLNGRRQYNHEGYVLVITFFAAKIVECLSQRHWFFRLQKVGIRMRSALVAMIYEKGLTLSCQSKQGRTSGEIINFMTVDAERIGNFSWYMHDPWMVLLQVGLALWILYRNLGLASIAALVATIIVMLINFPFGRMQERFQEKLMEAKDSRMKSTSEILRNMRILKLQGWEMKFLSKIFDLRKSEEGWLKKYVYNSAVISFVFWGAPTLVSVSTFGACILLGIPLESGKILSALATFRILQEPIYNLPDTISMIVQTKVSLDRLASYLCLDNLQPDIVERLPKGSSDVAVEVINSTLSWDVSSSNPTLKDINFKVFPGMKVAVCGTVGSGKSSLLSSLLGEVPKVSGSLKVCGTKAYVAQSPWIQSGKIEDNILFGKPMERERYDKVLEACSLSKDLEILSFGDQTVIGERGINLSGGQKQRIQIARALYQDADIYLFDDPFSAVDAHTGSHLFKEVLLGLLCSKSVIYVTHQVEFLPAADLILVMKDGRISQAGKYNDILNSGTDFMELIGAHQEALAVVDSVDANSVSEKSALGQENVIVKDAIAVDEKLESQDLKNDKLESVEPQRQIIQEEEREKGSVALDVYWKYITLAYGGALVPFILLGQVLFQLLQIGSNYWMAWATPVSEDVQAPVKLSTLMIVYVALAFGSSLCILLRATLLVTAGYKTATELFHKMHHCIFRSPMSFFDSTPSGRIMSRASTDQSAVDLELPYQFGSVAITVIQLIGIIGVMSQVSWLVFLVFIPVVAASIWYQRYYIAAARELSRLVGVCKAPLIQHFSETISGATTIRSFSQEFRFRSDNMRLSDGYSRPKFYTAGAMEWLCFRLDMLSSLTFVFSLVFLVSIPTGVIDPSLAGLAVTYGLSLNTLQAWLIWTLCNLENKIISVERILQYASVPSEPPLVIESNRPEQSWPSRGEVEIRDLQVRYAPHMPLVLRGITCTFKGGLRTGIVGRTGSGKSTLIQTLFRIVEPSAGEIRIDGVNILTIGLHDLRLRLSIIPQDPTMFEGTMRSNLDPLEEYTDDQIWEALDKCQLGDEVRKKEQKLDSSVSENGDNWSMGQRQLVCLGRVLLKRSKILVLDEATASVDTATDNLIQKTLREHFSDCTVITIAHRISSVIDSDMVLLLSNGIIEEYDTPVRLLEDKSSSFSKLVAEYTSRSSSSFD.

A run of 10 helical transmembrane segments spans residues 35–55 (PLFL…VLFF), 83–103 (ALFC…LSGF), 116–136 (LVSS…SICL), 153–173 (LWLV…FVMY), 183–203 (LLVF…VAVL), 325–345 (ILVT…GPAL), 364–386 (YVLV…HWFF), 439–459 (WYMH…WILY), 463–483 (GLAS…NFPF), and 551–571 (FVFW…CILL). Residues 325 to 606 (ILVTAFFAFI…LPDTISMIVQ (282 aa)) enclose the ABC transmembrane type-1 1 domain. In terms of domain architecture, ABC transporter 1 spans 640–863 (VEVINSTLSW…GTDFMELIGA (224 aa)). 675–682 (GTVGSGKS) lines the ATP pocket. Helical transmembrane passes span 940 to 960 (YITL…QVLF), 987 to 1007 (LSTL…CILL), 1077 to 1097 (IGII…FIPV), 1181 to 1201 (LSSL…TGVI), and 1205 to 1225 (LAGL…WLIW). The 283-residue stretch at 950–1232 (VPFILLGQVL…LIWTLCNLEN (283 aa)) folds into the ABC transmembrane type-1 2 domain. The ABC transporter 2 domain maps to 1271 to 1503 (IRDLQVRYAP…KSSSFSKLVA (233 aa)). 1303–1310 (GRTGSGKS) provides a ligand contact to ATP.

This sequence belongs to the ABC transporter superfamily. ABCC family. Conjugate transporter (TC 3.A.1.208) subfamily. In terms of tissue distribution, ubiquitous.

The protein localises to the membrane. The catalysed reaction is ATP + H2O + xenobioticSide 1 = ADP + phosphate + xenobioticSide 2.. Its activity is regulated as follows. Glutathione-conjugate transport is inhibited by decyl-glutathione and, to a lower extent, by GS-GS, but not by GSH. All transports are inhibited by vanadate. Pump for glutathione S-conjugates. Mediates the transport of glutathione conjugates such as chlorodinitrobenzene-GS (DNB-GS), and of chlorophyll catabolites such as Bn-NCC-1. Also transports heavy metals such as cadmium (Cd). The polypeptide is ABC transporter C family member 3 (ABCC3) (Arabidopsis thaliana (Mouse-ear cress)).